The chain runs to 109 residues: Putative gametogenetin-binding protein 1 (109 aa).

Residues 24–109 (KAFRSTDTVG…KGEMGNWPPE (86 aa)) form an interaction with GGN region.

In terms of assembly, interacts with CCDC159. Interacts with GGN.

The protein localises to the cytoplasm. It localises to the membrane. It is found in the golgi apparatus. Its function is as follows. May be involved in spermatogenesis. The protein is Putative gametogenetin-binding protein 1 (GGNBP1) of Homo sapiens (Human).